A 329-amino-acid polypeptide reads, in one-letter code: Eukaryotic translation initiation factor 2 subunit 1 (329 aa).

Residues D24–R95 form the S1 motif domain. Phosphoserine; by eIK1, eIK2 and PK4 is present on S59. Residues L291–D329 are disordered. Residues S298 to D329 show a composition bias toward acidic residues.

The protein belongs to the eIF-2-alpha family. Phosphorylated at Ser-59 by eIK1 in response to amino acid starvation. Phosphorylates at Ser-59 in schizonts and gametocytes but not in rings and young trophozoites. Phosphorylates at Ser-59 by eIK2 in salivary gland sporozoites but not in midgut and hemocoel sporozoites. Dephosphorylated at Ser-59 by UIS2. Phosphorylation of eIF2alpha subunit of the pre-initiation complex eIF2 inhibits recycling of inactive eIF2-GDP to active eIF2-GTP by limiting the activity of the guanine nucleotide exchange factor eIF2B and thus, inhibits protein translation.

The protein localises to the cytoplasm. It localises to the stress granule. Its function is as follows. Functions in the early steps of protein synthesis by forming a ternary complex with GTP and initiator tRNA. May regulate protein translation in response to amino acid starvation. May regulate protein at various stages of parasite development. This chain is Eukaryotic translation initiation factor 2 subunit 1, found in Plasmodium falciparum (isolate 3D7).